Consider the following 132-residue polypeptide: Small ribosomal subunit protein uS8 (132 aa).

The protein belongs to the universal ribosomal protein uS8 family. Part of the 30S ribosomal subunit. Contacts proteins S5 and S12.

Functionally, one of the primary rRNA binding proteins, it binds directly to 16S rRNA central domain where it helps coordinate assembly of the platform of the 30S subunit. In Xanthomonas oryzae pv. oryzae (strain MAFF 311018), this protein is Small ribosomal subunit protein uS8.